The chain runs to 653 residues: MPDRLVPATLAFRDDGTLISPEYGDIYYNVAGAFAQANYVFIAGNRLPARWQGSRTFTIVETGFGTGTNFLATWAAWRDDPARCERLHFVSFEKHPFTRDDLRRALSHIVAGTTLSEQATLLADAWPPAVPGFHRIEFEGGRVVLTLALGDARELLPKLVARADAFYLDGFAPAKNADLWSADVFRALARVAADDATFATYSSAGVVKQALVEAGFAYRKMPGLAGKFAMLVGEYAPRWRMRRHEPPRALPVAVREAIVIGAGLAGCALVERLAARGWHVTLIERHAQIASEASGNPAGVFHPLMTRDDNVASRLTRSGFLHALARWRALEHAGHTFARSTRGMIHLAESADDFVRMRDAFDALGAPADHVTLLDADAARAHLNLPVAHGGLLFPHGGAVWPAGLCAAQVAAAGERVTLRTGTEVARLERDGDTWRAIGADGATIAEAPVVVLANAGDAVRLAGLRHVALQPVRGQLTLLPPGTTAPLPCPAIGDGYAVPLDDGTLLIGATFEPDDVDPEIRDAGHLENLARIRHLLPGLVGDVPDVDTLRGRVAFRWVVADRVPLIGPLADEAQAVANARALSGAKARDLPRTAGLYGAFGFGSRGLVWASLGAELIASQLEGEPLPLERELVDAVDPARFLIRALRGRKLG.

The tRNA (mnm(5)s(2)U34)-methyltransferase stretch occupies residues 1–236 (MPDRLVPATL…KFAMLVGEYA (236 aa)). The FAD-dependent cmnm(5)s(2)U34 oxidoreductase stretch occupies residues 260-653 (IGAGLAGCAL…IRALRGRKLG (394 aa)).

In the N-terminal section; belongs to the methyltransferase superfamily. tRNA (mnm(5)s(2)U34)-methyltransferase family. It in the C-terminal section; belongs to the DAO family. FAD is required as a cofactor.

It localises to the cytoplasm. It carries out the reaction 5-aminomethyl-2-thiouridine(34) in tRNA + S-adenosyl-L-methionine = 5-methylaminomethyl-2-thiouridine(34) in tRNA + S-adenosyl-L-homocysteine + H(+). In terms of biological role, catalyzes the last two steps in the biosynthesis of 5-methylaminomethyl-2-thiouridine (mnm(5)s(2)U) at the wobble position (U34) in tRNA. Catalyzes the FAD-dependent demodification of cmnm(5)s(2)U34 to nm(5)s(2)U34, followed by the transfer of a methyl group from S-adenosyl-L-methionine to nm(5)s(2)U34, to form mnm(5)s(2)U34. The chain is tRNA 5-methylaminomethyl-2-thiouridine biosynthesis bifunctional protein MnmC from Burkholderia vietnamiensis (strain G4 / LMG 22486) (Burkholderia cepacia (strain R1808)).